Consider the following 233-residue polypeptide: Phosphatidylserine decarboxylase proenzyme (233 aa).

S190 functions as the Schiff-base intermediate with substrate; via pyruvic acid in the catalytic mechanism. S190 carries the pyruvic acid (Ser); by autocatalysis modification.

The protein belongs to the phosphatidylserine decarboxylase family. PSD-A subfamily. In terms of assembly, heterodimer of a large membrane-associated beta subunit and a small pyruvoyl-containing alpha subunit. Pyruvate is required as a cofactor. Post-translationally, is synthesized initially as an inactive proenzyme. Formation of the active enzyme involves a self-maturation process in which the active site pyruvoyl group is generated from an internal serine residue via an autocatalytic post-translational modification. Two non-identical subunits are generated from the proenzyme in this reaction, and the pyruvate is formed at the N-terminus of the alpha chain, which is derived from the carboxyl end of the proenzyme. The post-translation cleavage follows an unusual pathway, termed non-hydrolytic serinolysis, in which the side chain hydroxyl group of the serine supplies its oxygen atom to form the C-terminus of the beta chain, while the remainder of the serine residue undergoes an oxidative deamination to produce ammonia and the pyruvoyl prosthetic group on the alpha chain.

The protein resides in the cell membrane. The enzyme catalyses a 1,2-diacyl-sn-glycero-3-phospho-L-serine + H(+) = a 1,2-diacyl-sn-glycero-3-phosphoethanolamine + CO2. The protein operates within phospholipid metabolism; phosphatidylethanolamine biosynthesis; phosphatidylethanolamine from CDP-diacylglycerol: step 2/2. Its function is as follows. Catalyzes the formation of phosphatidylethanolamine (PtdEtn) from phosphatidylserine (PtdSer). This is Phosphatidylserine decarboxylase proenzyme from Xanthobacter autotrophicus (strain ATCC BAA-1158 / Py2).